Here is a 133-residue protein sequence, read N- to C-terminus: Basic leucine zipper transcriptional factor ATF-like 3 (133 aa).

The tract at residues 1 to 68 (MSQGPPAGGV…EHESLEQENS (68 aa)) is disordered. Phosphoserine occurs at positions 2 and 24. A compositionally biased stretch (polar residues) spans 11-24 (LQSSVAAPGNQPQS). In terms of domain architecture, bZIP spans 28 to 91 (DDRKVRRREK…RHLTEALKEH (64 aa)). The interval 30–55 (RKVRRREKNRVAAQRSRKKQTQKSDK) is basic motif. Over residues 51-68 (QKSDKLHEEHESLEQENS) the composition is skewed to basic and acidic residues. Residues 56-84 (LHEEHESLEQENSVLRREIAKLKEELRHL) form a leucine-zipper region.

It belongs to the bZIP family. As to quaternary structure, heterodimer; heterodimerizes with JUN family proteins. Interacts with JUN. Ubiquitously expressed.

It is found in the nucleus. AP-1 family transcription factor that controls the differentiation of CD8(+) thymic conventional dendritic cells in the immune system. Acts via the formation of a heterodimer with JUN family proteins that recognizes and binds DNA sequence 5'-TGA[CG]TCA-3' and regulates expression of target genes. Required for development of CD8-alpha(+) classical dendritic cells (cDCs) and related CD103(+) dendritic cells that cross-present antigens to CD8 T-cells and produce interleukin-12 (IL12) in response to pathogens. This is Basic leucine zipper transcriptional factor ATF-like 3 (Batf3) from Rattus norvegicus (Rat).